The sequence spans 56 residues: Preprotein translocase subunit SecG (56 aa).

Residues Met1–Ser29 lie on the Cytoplasmic side of the membrane. The chain crosses the membrane as a helical span at residues Pro30 to Gly51. Over Pro52–Gly56 the chain is Extracellular.

The protein belongs to the SEC61-beta family. As to quaternary structure, component of the protein translocase complex. Heterotrimer consisting of alpha (SecY), beta (SecG) and gamma (SecE) subunits. Can form oligomers of the heterotrimer.

It is found in the cell membrane. Involved in protein export. The function of the beta subunit is unknown, but it may be involved in stabilization of the trimeric complex. The sequence is that of Preprotein translocase subunit SecG from Thermococcus gammatolerans (strain DSM 15229 / JCM 11827 / EJ3).